A 168-amino-acid polypeptide reads, in one-letter code: ATP synthase subunit b (168 aa).

A helical membrane pass occupies residues 9–29 (SIPFGTIAYTLFIFLLLLVML).

It belongs to the ATPase B chain family. As to quaternary structure, F-type ATPases have 2 components, F(1) - the catalytic core - and F(0) - the membrane proton channel. F(1) has five subunits: alpha(3), beta(3), gamma(1), delta(1), epsilon(1). F(0) has three main subunits: a(1), b(2) and c(10-14). The alpha and beta chains form an alternating ring which encloses part of the gamma chain. F(1) is attached to F(0) by a central stalk formed by the gamma and epsilon chains, while a peripheral stalk is formed by the delta and b chains.

The protein resides in the cell membrane. In terms of biological role, f(1)F(0) ATP synthase produces ATP from ADP in the presence of a proton or sodium gradient. F-type ATPases consist of two structural domains, F(1) containing the extramembraneous catalytic core and F(0) containing the membrane proton channel, linked together by a central stalk and a peripheral stalk. During catalysis, ATP synthesis in the catalytic domain of F(1) is coupled via a rotary mechanism of the central stalk subunits to proton translocation. Functionally, component of the F(0) channel, it forms part of the peripheral stalk, linking F(1) to F(0). The polypeptide is ATP synthase subunit b (Bacillus mycoides (strain KBAB4) (Bacillus weihenstephanensis)).